The primary structure comprises 64 residues: Large ribosomal subunit protein bL35 (64 aa).

2 disordered regions span residues 1-22 (MPKA…TGKI) and 34-64 (EHKP…LLNG). Over residues 34-46 (EHKPTTRTRRLEG) the composition is skewed to basic and acidic residues. The span at 50–64 (VSANDTKRVNSLLNG) shows a compositional bias: polar residues.

The protein belongs to the bacterial ribosomal protein bL35 family.

In Mycolicibacterium paratuberculosis (strain ATCC BAA-968 / K-10) (Mycobacterium paratuberculosis), this protein is Large ribosomal subunit protein bL35.